The sequence spans 588 residues: 3-methylmercaptopropionyl-CoA dehydrogenase (588 aa).

Glu-435 functions as the Proton acceptor in the catalytic mechanism.

The protein belongs to the acyl-CoA dehydrogenase family. Requires FAD as cofactor.

It carries out the reaction 3-(methylsulfanyl)propanoyl-CoA + oxidized [electron-transfer flavoprotein] + H(+) = 3-(methylsulfanyl)acryloyl-CoA + reduced [electron-transfer flavoprotein]. In terms of biological role, involved in the assimilation of dimethylsulphoniopropionate (DMSP), an important compound in the fixation of carbon in marine phytoplankton, by mediating the conversion of 3-(methylthio)propanoyl-CoA (MMPA-CoA) to 3-(methylthio)acryloyl-CoA (MTA-CoA). The sequence is that of 3-methylmercaptopropionyl-CoA dehydrogenase from Ruegeria pomeroyi (strain ATCC 700808 / DSM 15171 / DSS-3) (Silicibacter pomeroyi).